The primary structure comprises 241 residues: Sugar fermentation stimulation protein homolog (241 aa).

The protein belongs to the SfsA family.

This Nostoc sp. (strain PCC 7120 / SAG 25.82 / UTEX 2576) protein is Sugar fermentation stimulation protein homolog.